We begin with the raw amino-acid sequence, 800 residues long: Phenylalanine--tRNA ligase beta subunit (800 aa).

Residues 39 to 154 enclose the tRNA-binding domain; it reads TKDIKNLVVG…ESQVPGTDAL (116 aa). A B5 domain is found at 408–483; sequence AFITPIDITA…RIYGYDDIPS (76 aa). Mg(2+) contacts are provided by Asp-461, Asp-467, Glu-470, and Glu-471. The FDX-ACB domain maps to 708–800; the sequence is PIFPGMSRDI…ALIEQGAVIR (93 aa).

The protein belongs to the phenylalanyl-tRNA synthetase beta subunit family. Type 1 subfamily. In terms of assembly, tetramer of two alpha and two beta subunits. The cofactor is Mg(2+).

It is found in the cytoplasm. The enzyme catalyses tRNA(Phe) + L-phenylalanine + ATP = L-phenylalanyl-tRNA(Phe) + AMP + diphosphate + H(+). The polypeptide is Phenylalanine--tRNA ligase beta subunit (Staphylococcus aureus (strain bovine RF122 / ET3-1)).